Consider the following 218-residue polypeptide: Small ribosomal subunit protein uS3c (218 aa).

The KH type-2 domain maps to 47–118 (VQKNMRIFSG…KLNIAITRIG (72 aa)).

This sequence belongs to the universal ribosomal protein uS3 family. Part of the 30S ribosomal subunit.

Its subcellular location is the plastid. It localises to the chloroplast. In Cucumis sativus (Cucumber), this protein is Small ribosomal subunit protein uS3c (rps3).